Here is a 198-residue protein sequence, read N- to C-terminus: uncharacterized protein (198 aa).

Disordered stretches follow at residues 15-69 (RLGQ…KDTR) and 172-198 (FSVK…LWGL). Composition is skewed to basic and acidic residues over residues 37–49 (HKSF…DQSR) and 56–69 (FNEK…KDTR). Low complexity predominate over residues 176 to 186 (ESSNLSNNDSD). Residues 187-198 (ASLDEDTLLWGL) show a composition bias toward acidic residues.

Its subcellular location is the nucleus. This is an uncharacterized protein from Schizosaccharomyces pombe (strain 972 / ATCC 24843) (Fission yeast).